The following is a 565-amino-acid chain: MWLCALALASLAACTAWGHPSAPPVVDTVHGKVLGKFVSLEGFAQPVAVFLGVPFAKPPLGSLRFAPPQPAESWSHVKNTTSYPPMCSQDAVSGHMLSELFTNRKENIPLKFSEDCLYLNIYTPADLTKRGRLPVMVWIHGGGLMVGGASTYDGLALSAHENVVVVTIQYRLGIWGFFSTGDEHSRGNWGHLDQVAALRWVQDNIANFGGDPGSVTIFGESAGGQSVSILLLSPLTKNLFHRAISESGVALLSSLFRKNTKSLAEKIAIEAGCKTTTSAVMVHCLRQKTEEELMEVTLKMKFMALDLVGDPKENTAFLTTVIDGVLLPKAPAEILAEKKYNMLPYMVGINQQEFGWIIPMQMLGYPLSEGKLDQKTATELLWKSYPIVNVSKELTPVATEKYLGGTDDPVKKKDLFLDMLADLLFGVPSVNVARHHRDAGAPTYMYEYRYRPSFSSDMRPKTVIGDHGDEIFSVLGAPFLKEGATEEEIKLSKMVMKYWANFARNGNPNGEGLPQWPAYDYKEGYLQIGATTQAAQKLKDKEVAFWTELWAKEAARPRETEHIEL.

An N-terminal signal peptide occupies residues 1 to 18; the sequence is MWLCALALASLAACTAWG. Asparagine 79 carries N-linked (GlcNAc...) asparagine glycosylation. Cysteine 87 and cysteine 116 are disulfide-bonded. Catalysis depends on serine 221, which acts as the Acyl-ester intermediate. An intrachain disulfide couples cysteine 273 to cysteine 284. Glutamate 353 acts as the Charge relay system in catalysis. An N-linked (GlcNAc...) asparagine glycan is attached at asparagine 389. Histidine 467 acts as the Charge relay system in catalysis. A short sequence motif (prevents secretion from ER) is located at residue leucine 565.

This sequence belongs to the type-B carboxylesterase/lipase family. In terms of assembly, monomer.

The protein localises to the endoplasmic reticulum lumen. The enzyme catalyses a carboxylic ester + H2O = an alcohol + a carboxylate + H(+). Involved in the detoxification of xenobiotics and in the activation of ester and amide prodrugs. The polypeptide is Liver carboxylesterase 1 (Oryctolagus cuniculus (Rabbit)).